Consider the following 384-residue polypeptide: Carbamoyl phosphate synthase small chain (384 aa).

The segment at 1–195 (MLPVLPPALL…LGRGHGTLAD (195 aa)) is CPSase. S50, G247, and G249 together coordinate L-glutamine. The Glutamine amidotransferase type-1 domain maps to 199 to 384 (HVVAYDFGVK…RFVALMQERA (186 aa)). The Nucleophile role is filled by C275. Residues L276, Q279, N317, G319, and F320 each coordinate L-glutamine. Active-site residues include H359 and E361.

This sequence belongs to the CarA family. In terms of assembly, composed of two chains; the small (or glutamine) chain promotes the hydrolysis of glutamine to ammonia, which is used by the large (or ammonia) chain to synthesize carbamoyl phosphate. Tetramer of heterodimers (alpha,beta)4.

It catalyses the reaction hydrogencarbonate + L-glutamine + 2 ATP + H2O = carbamoyl phosphate + L-glutamate + 2 ADP + phosphate + 2 H(+). The catalysed reaction is L-glutamine + H2O = L-glutamate + NH4(+). The protein operates within amino-acid biosynthesis; L-arginine biosynthesis; carbamoyl phosphate from bicarbonate: step 1/1. It functions in the pathway pyrimidine metabolism; UMP biosynthesis via de novo pathway; (S)-dihydroorotate from bicarbonate: step 1/3. Functionally, small subunit of the glutamine-dependent carbamoyl phosphate synthetase (CPSase). CPSase catalyzes the formation of carbamoyl phosphate from the ammonia moiety of glutamine, carbonate, and phosphate donated by ATP, constituting the first step of 2 biosynthetic pathways, one leading to arginine and/or urea and the other to pyrimidine nucleotides. The small subunit (glutamine amidotransferase) binds and cleaves glutamine to supply the large subunit with the substrate ammonia. The protein is Carbamoyl phosphate synthase small chain of Rubrivivax gelatinosus (strain NBRC 100245 / IL144).